We begin with the raw amino-acid sequence, 541 residues long: Cyclin-T1-4 (541 aa).

Positions 277 to 366 (VSEVESSVGG…KSRSGVEAPG (90 aa)) are disordered. The segment covering 307-325 (SDNLGGSTKATQNRSNDNG) has biased composition (polar residues). Basic and acidic residues predominate over residues 336–354 (QKGERDTETKDSMHTESHP). Ser-396 is subject to Phosphoserine. A disordered region spans residues 445 to 541 (EDDKDIQNKS…REPRRHSQER (97 aa)). Residues 493-511 (MESPCEKQLGEGKRRHDNS) are compositionally biased toward basic and acidic residues. The segment covering 519-528 (KTNPGGSSHS) has biased composition (polar residues). Over residues 529-541 (YGDREPRRHSQER) the composition is skewed to basic and acidic residues.

The protein belongs to the cyclin family. Cyclin T subfamily.

This is Cyclin-T1-4 (CYCT1-4) from Arabidopsis thaliana (Mouse-ear cress).